A 791-amino-acid polypeptide reads, in one-letter code: Phenylalanine--tRNA ligase beta subunit (791 aa).

A tRNA-binding domain is found at 39–147; the sequence is GDALGQVVVA…DDAPVGQALA (109 aa). The B5 domain maps to 400 to 475; the sequence is PQPASILLRR…RIHGYDRVPT (76 aa). Mg(2+) is bound by residues Asp-453, Asp-459, Glu-462, and Glu-463. Residues 697 to 790 form the FDX-ACB domain; it reads SRYPSMRRDL…IEREHRARIR (94 aa).

It belongs to the phenylalanyl-tRNA synthetase beta subunit family. Type 1 subfamily. As to quaternary structure, tetramer of two alpha and two beta subunits. The cofactor is Mg(2+).

It is found in the cytoplasm. It catalyses the reaction tRNA(Phe) + L-phenylalanine + ATP = L-phenylalanyl-tRNA(Phe) + AMP + diphosphate + H(+). The protein is Phenylalanine--tRNA ligase beta subunit of Xanthomonas campestris pv. campestris (strain 8004).